We begin with the raw amino-acid sequence, 453 residues long: uncharacterized protein (453 aa).

2 disordered regions span residues 15-42 (LKRK…SETM) and 425-453 (TNEI…RHAK). A compositionally biased stretch (polar residues) spans 425 to 437 (TNEISSSNNSGTA). A compositionally biased stretch (basic residues) spans 443 to 453 (QNRKRNRRHAK).

This is an uncharacterized protein from Caenorhabditis elegans.